The chain runs to 156 residues: CASP-like protein 5C1 (156 aa).

Residues 1 to 21 (MENRERAGAGAVGSAGSLGLR) are Cytoplasmic-facing. The chain crosses the membrane as a helical span at residues 22 to 42 (VGQAVFSSASLLFMSVGVEFF). The Extracellular portion of the chain corresponds to 43 to 46 (SYTA). The chain crosses the membrane as a helical span at residues 47–67 (FCFLVTIMGLVIPWSCTLAMI). The Cytoplasmic portion of the chain corresponds to 68–81 (DVYSILVGCPLRVP). A helical transmembrane segment spans residues 82-102 (GVMVIVVIGDWVLAILSLAAA). At 103–132 (SSSAAVIDLLLQFHGSHCSPRFCGRYQLSA) the chain is on the extracellular side. A helical transmembrane segment spans residues 133-153 (MMAFLSWFLTAASSLFNLWFI). The Cytoplasmic segment spans residues 154-156 (ASR).

The protein belongs to the Casparian strip membrane proteins (CASP) family. In terms of assembly, homodimer and heterodimers.

It is found in the cell membrane. In Oryza sativa subsp. japonica (Rice), this protein is CASP-like protein 5C1.